The following is a 138-amino-acid chain: Small ribosomal subunit protein uS12 (138 aa).

The residue at position 89 (Asp-89) is a 3-methylthioaspartic acid. Positions 107–138 (VSGRMQRRSKYGAKFPKTGTGKTKAVPTKNKK) are disordered.

This sequence belongs to the universal ribosomal protein uS12 family. In terms of assembly, part of the 30S ribosomal subunit. Contacts proteins S8 and S17. May interact with IF1 in the 30S initiation complex.

In terms of biological role, with S4 and S5 plays an important role in translational accuracy. Its function is as follows. Interacts with and stabilizes bases of the 16S rRNA that are involved in tRNA selection in the A site and with the mRNA backbone. Located at the interface of the 30S and 50S subunits, it traverses the body of the 30S subunit contacting proteins on the other side and probably holding the rRNA structure together. The combined cluster of proteins S8, S12 and S17 appears to hold together the shoulder and platform of the 30S subunit. The chain is Small ribosomal subunit protein uS12 from Azobacteroides pseudotrichonymphae genomovar. CFP2.